A 105-amino-acid polypeptide reads, in one-letter code: ATP synthase subunit c (105 aa).

3 helical membrane passes run 3–23 (FLSL…GGMG), 32–52 (SILG…IGMG), and 78–98 (VAMA…IIAI).

This sequence belongs to the ATPase C chain family. F-type ATPases have 2 components, F(1) - the catalytic core - and F(0) - the membrane proton channel. F(1) has five subunits: alpha(3), beta(3), gamma(1), delta(1), epsilon(1). F(0) has three main subunits: a(1), b(2) and c(10-14). The alpha and beta chains form an alternating ring which encloses part of the gamma chain. F(1) is attached to F(0) by a central stalk formed by the gamma and epsilon chains, while a peripheral stalk is formed by the delta and b chains.

The protein localises to the cell inner membrane. F(1)F(0) ATP synthase produces ATP from ADP in the presence of a proton or sodium gradient. F-type ATPases consist of two structural domains, F(1) containing the extramembraneous catalytic core and F(0) containing the membrane proton channel, linked together by a central stalk and a peripheral stalk. During catalysis, ATP synthesis in the catalytic domain of F(1) is coupled via a rotary mechanism of the central stalk subunits to proton translocation. Its function is as follows. Key component of the F(0) channel; it plays a direct role in translocation across the membrane. A homomeric c-ring of between 10-14 subunits forms the central stalk rotor element with the F(1) delta and epsilon subunits. This is ATP synthase subunit c from Helicobacter pylori (strain Shi470).